The chain runs to 423 residues: Histidine--tRNA ligase (423 aa).

Belongs to the class-II aminoacyl-tRNA synthetase family. In terms of assembly, homodimer.

Its subcellular location is the cytoplasm. It catalyses the reaction tRNA(His) + L-histidine + ATP = L-histidyl-tRNA(His) + AMP + diphosphate + H(+). The chain is Histidine--tRNA ligase from Haemophilus influenzae (strain 86-028NP).